A 71-amino-acid polypeptide reads, in one-letter code: V-type proton ATPase subunit e (71 aa).

Residues 1 to 2 (MS) are Lumenal-facing. Residues 3 to 23 (FFHVVFVAFVIAAIGAAGWFV) form a helical membrane-spanning segment. Over 24-35 (TPKGKNQTLLRT) the chain is Cytoplasmic. The chain crosses the membrane as a helical span at residues 36-56 (SLLLTLTCCYLMWAITYLCQL). At 57–71 (HPLITPRRSDLRMEY) the chain is on the lumenal side.

This sequence belongs to the V-ATPase e1/e2 subunit family. V-ATPase is a heteromultimeric enzyme composed of a peripheral catalytic V1 complex (components A to H) attached to an integral membrane V0 proton pore complex (components: a, c, c', c'', d, e, f and VOA1).

It is found in the vacuole membrane. Its function is as follows. Subunit of the V0 complex of vacuolar(H+)-ATPase (V-ATPase), a multisubunit enzyme composed of a peripheral complex (V1) that hydrolyzes ATP and a membrane integral complex (V0) that translocates protons. V-ATPase is responsible for acidifying and maintaining the pH of intracellular compartments. This is V-type proton ATPase subunit e (VMA9) from Cryptococcus neoformans var. neoformans serotype D (strain JEC21 / ATCC MYA-565) (Filobasidiella neoformans).